Here is an 87-residue protein sequence, read N- to C-terminus: Acyl-CoA-binding protein (87 aa).

Serine 2 carries the N-acetylserine modification. Residues 2-87 enclose the ACB domain; the sequence is SQAEFDKAAE…VEELKKKYGI (86 aa). Lysine 8 is subject to N6-acetyllysine; alternate. Position 8 is an N6-succinyllysine; alternate (lysine 8). An an acyl-CoA-binding site is contributed by lysine 14. An N6-succinyllysine modification is found at lysine 17. Lysine 19 is subject to N6-acetyllysine. Position 29 is a phosphotyrosine (tyrosine 29). An acyl-CoA is bound by residues 29 to 33, lysine 51, lysine 55, and tyrosine 74; that span reads YSHYK. Lysine 51 carries the N6-acetyllysine modification. Lysine 55 bears the N6-acetyllysine; alternate mark. Lysine 55 is subject to N6-succinyllysine; alternate. At lysine 55 the chain carries N6-(2-hydroxyisobutyryl)lysine; alternate. Lysine 55 carries the N6-malonyllysine; alternate modification. The residue at position 77 (lysine 77) is an N6-acetyllysine; alternate. Lysine 77 is subject to N6-succinyllysine; alternate.

It belongs to the ACBP family. Monomer.

The protein localises to the endoplasmic reticulum. It is found in the golgi apparatus. Functionally, binds medium- and long-chain acyl-CoA esters with very high affinity and may function as an intracellular carrier of acyl-CoA esters. It is also able to displace diazepam from the benzodiazepine (BZD) recognition site located on the GABA type A receptor. It is therefore possible that this protein also acts as a neuropeptide to modulate the action of the GABA receptor. This Bos taurus (Bovine) protein is Acyl-CoA-binding protein (DBI).